The sequence spans 772 residues: Metabotropic glutamate receptor-like protein G (772 aa).

An N-terminal signal peptide occupies residues 1 to 23; sequence MKKIIFLVLFLIFIFKDIKSSYG. At 24-391 the chain is on the extracellular side; that stretch reads VDLVNFKMIT…TQVKFSPSIQ (368 aa). Asn73, Asn126, Asn262, Asn313, Asn343, and Asn378 each carry an N-linked (GlcNAc...) asparagine glycan. The chain crosses the membrane as a helical span at residues 392 to 412; the sequence is IGVSIVSGVLIAIVLLSMVGV. Residues 413–426 lie on the Cytoplasmic side of the membrane; sequence YKYRASSSIRSASP. Residues 427–447 traverse the membrane as a helical segment; sequence IFLIFILFGALIVFGGIILWV. Over 448 to 463 the chain is Extracellular; it reads SELNDHVCNGRLWMVT. Residues 464–484 form a helical membrane-spanning segment; sequence LGFSTLIGSLVVKNFRIWLIF. Residues 485–500 lie on the Cytoplasmic side of the membrane; sequence DNPELKTVKITNYQLY. Residues 501-521 form a helical membrane-spanning segment; it reads PWVACCLVINIILMSILTSLG. Residues 522–551 lie on the Extracellular side of the membrane; that stretch reads DLREVDATGIDSLGKYEFLKICKMNNSGAS. Asn546 carries an N-linked (GlcNAc...) asparagine glycan. The chain crosses the membrane as a helical span at residues 552 to 572; the sequence is VLYTILAYFGALLLTGVFVSW. Residues 573 to 586 lie on the Cytoplasmic side of the membrane; sequence KIRIVDIEEFNESR. A helical membrane pass occupies residues 587–607; the sequence is AIAHTLYAISFCLFVIVPLMI. Residues 608-616 are Extracellular-facing; the sequence is SPLEKQSET. Residues 617-637 traverse the membrane as a helical segment; sequence IILSVAGLFITTAAVLIIFLP. Topologically, residues 638–772 are cytoplasmic; it reads KFYRVYEYGE…QIEPDEKNQD (135 aa). A disordered region spans residues 664–772; sequence TARAESHKSS…QIEPDEKNQD (109 aa). Acidic residues predominate over residues 718 to 728; sequence FTEESVSEIDE. Residues 740-753 show a composition bias toward low complexity; the sequence is PEINQSEQQNSEIE. Positions 754 to 763 are enriched in pro residues; that stretch reads QPPPPPPPQQ.

It in the N-terminal section; belongs to the BMP lipoprotein family. This sequence in the C-terminal section; belongs to the G-protein coupled receptor 3 family. GABA-B receptor subfamily.

It is found in the membrane. The polypeptide is Metabotropic glutamate receptor-like protein G (grlG) (Dictyostelium discoideum (Social amoeba)).